The primary structure comprises 299 residues: ATP phosphoribosyltransferase (299 aa).

It belongs to the ATP phosphoribosyltransferase family. Long subfamily. In terms of assembly, equilibrium between an active dimeric form, an inactive hexameric form and higher aggregates. Interconversion between the various forms is largely reversible and is influenced by the natural substrates and inhibitors of the enzyme. It depends on Mg(2+) as a cofactor.

Its subcellular location is the cytoplasm. The catalysed reaction is 1-(5-phospho-beta-D-ribosyl)-ATP + diphosphate = 5-phospho-alpha-D-ribose 1-diphosphate + ATP. Its pathway is amino-acid biosynthesis; L-histidine biosynthesis; L-histidine from 5-phospho-alpha-D-ribose 1-diphosphate: step 1/9. With respect to regulation, feedback inhibited by histidine. Functionally, catalyzes the condensation of ATP and 5-phosphoribose 1-diphosphate to form N'-(5'-phosphoribosyl)-ATP (PR-ATP). Has a crucial role in the pathway because the rate of histidine biosynthesis seems to be controlled primarily by regulation of HisG enzymatic activity. The chain is ATP phosphoribosyltransferase from Buchnera aphidicola subsp. Schlechtendalia chinensis.